The sequence spans 287 residues: ATP synthase gamma chain (287 aa).

The protein belongs to the ATPase gamma chain family. In terms of assembly, F-type ATPases have 2 components, CF(1) - the catalytic core - and CF(0) - the membrane proton channel. CF(1) has five subunits: alpha(3), beta(3), gamma(1), delta(1), epsilon(1). CF(0) has three main subunits: a, b and c.

The protein resides in the cell inner membrane. In terms of biological role, produces ATP from ADP in the presence of a proton gradient across the membrane. The gamma chain is believed to be important in regulating ATPase activity and the flow of protons through the CF(0) complex. This chain is ATP synthase gamma chain, found in Photorhabdus laumondii subsp. laumondii (strain DSM 15139 / CIP 105565 / TT01) (Photorhabdus luminescens subsp. laumondii).